The following is a 195-amino-acid chain: Pyridoxal 5'-phosphate synthase subunit PdxT (195 aa).

46-48 (GES) provides a ligand contact to L-glutamine. Cys-78 (nucleophile) is an active-site residue. Residues Arg-105 and 133–134 (IR) contribute to the L-glutamine site. Residues His-169 and Glu-171 each act as charge relay system in the active site.

This sequence belongs to the glutaminase PdxT/SNO family. In the presence of PdxS, forms a dodecamer of heterodimers. Only shows activity in the heterodimer.

The catalysed reaction is aldehydo-D-ribose 5-phosphate + D-glyceraldehyde 3-phosphate + L-glutamine = pyridoxal 5'-phosphate + L-glutamate + phosphate + 3 H2O + H(+). It carries out the reaction L-glutamine + H2O = L-glutamate + NH4(+). It participates in cofactor biosynthesis; pyridoxal 5'-phosphate biosynthesis. Catalyzes the hydrolysis of glutamine to glutamate and ammonia as part of the biosynthesis of pyridoxal 5'-phosphate. The resulting ammonia molecule is channeled to the active site of PdxS. The polypeptide is Pyridoxal 5'-phosphate synthase subunit PdxT (Shouchella clausii (strain KSM-K16) (Alkalihalobacillus clausii)).